A 133-amino-acid chain; its full sequence is Ribosome-binding factor A (133 aa).

It belongs to the RbfA family. As to quaternary structure, monomer. Binds 30S ribosomal subunits, but not 50S ribosomal subunits or 70S ribosomes.

Its subcellular location is the cytoplasm. Functionally, one of several proteins that assist in the late maturation steps of the functional core of the 30S ribosomal subunit. Associates with free 30S ribosomal subunits (but not with 30S subunits that are part of 70S ribosomes or polysomes). Required for efficient processing of 16S rRNA. May interact with the 5'-terminal helix region of 16S rRNA. This chain is Ribosome-binding factor A, found in Bordetella pertussis (strain Tohama I / ATCC BAA-589 / NCTC 13251).